An 861-amino-acid polypeptide reads, in one-letter code: Oleate activated transcription factor 3 (861 aa).

The zn(2)-C6 fungal-type DNA-binding region spans 19 to 47; that stretch reads NCKKRKSKCDRTKPCGTCVRLGDVDSCVY. Residues 52–61 are compositionally biased toward polar residues; it reads SGQPESSPSL. The segment at 52–99 is disordered; the sequence is SGQPESSPSLNDADPLRKQSTPAERISPGFIKKRRSSQTRQDEDHWQR.

Belongs to the OAF3 family.

It localises to the cytoplasm. The protein localises to the nucleus. The protein resides in the mitochondrion. Its function is as follows. Transcriptional inhibitor with a significantly increased number of target genes in response to oleate. The chain is Oleate activated transcription factor 3 (OAF3) from Saccharomyces cerevisiae (strain JAY291) (Baker's yeast).